We begin with the raw amino-acid sequence, 102 residues long: Hypersensitivity to hygromycin-B protein 1 (102 aa).

Positions 1–17 (MSLSFLLFSPFLPPCFS) are cleaved as a signal peptide. The helical transmembrane segment at 18–38 (SISICLSVLSTVSFFFAFTIP) threads the bilayer. The Cytoplasmic portion of the chain corresponds to 39–69 (HYVLRCGSVDEWHIHSSAEDFRTQRCVCAVK). A helical transmembrane segment spans residues 70-90 (LSASLLGCLLACASWSLLLEV). At 91–102 (SRIKWHVGTAYS) the chain is on the extracellular side.

The protein resides in the membrane. Its function is as follows. Involved in vacuolar trafficking. This chain is Hypersensitivity to hygromycin-B protein 1, found in Saccharomyces cerevisiae (strain ATCC 204508 / S288c) (Baker's yeast).